Consider the following 183-residue polypeptide: Putative manganese efflux pump MntP (183 aa).

6 consecutive transmembrane segments (helical) span residues 8–28 (MIAL…VALG), 39–59 (IFYI…VGMA), 68–88 (FGSI…GQMI), 108–128 (LFFA…LGIF), 133–153 (MATI…GLLV), and 162–182 (GSYS…KLLF).

It belongs to the MntP (TC 9.B.29) family.

Its subcellular location is the cell membrane. In terms of biological role, probably functions as a manganese efflux pump. In Geobacillus thermodenitrificans (strain NG80-2), this protein is Putative manganese efflux pump MntP.